The sequence spans 341 residues: tRNA N6-adenosine threonylcarbamoyltransferase (341 aa).

Fe cation is bound by residues H111 and H115. Residues 134-138 (LVSGG), D167, G180, and N276 contribute to the substrate site. D304 is a Fe cation binding site.

This sequence belongs to the KAE1 / TsaD family. Fe(2+) serves as cofactor.

Its subcellular location is the cytoplasm. The enzyme catalyses L-threonylcarbamoyladenylate + adenosine(37) in tRNA = N(6)-L-threonylcarbamoyladenosine(37) in tRNA + AMP + H(+). In terms of biological role, required for the formation of a threonylcarbamoyl group on adenosine at position 37 (t(6)A37) in tRNAs that read codons beginning with adenine. Is involved in the transfer of the threonylcarbamoyl moiety of threonylcarbamoyl-AMP (TC-AMP) to the N6 group of A37, together with TsaE and TsaB. TsaD likely plays a direct catalytic role in this reaction. This is tRNA N6-adenosine threonylcarbamoyltransferase from Pseudomonas syringae pv. syringae (strain B728a).